Reading from the N-terminus, the 253-residue chain is Phosphate import ATP-binding protein PstB (253 aa).

Residues 7–248 (IEVEDLNVYF…PRDKRTEDYI (242 aa)) form the ABC transporter domain. 39 to 46 (GPSGCGKS) contributes to the ATP binding site.

This sequence belongs to the ABC transporter superfamily. Phosphate importer (TC 3.A.1.7) family. In terms of assembly, the complex is composed of two ATP-binding proteins (PstB), two transmembrane proteins (PstC and PstA) and a solute-binding protein (PstS).

The protein resides in the cell membrane. It carries out the reaction phosphate(out) + ATP + H2O = ADP + 2 phosphate(in) + H(+). Its function is as follows. Part of the ABC transporter complex PstSACB involved in phosphate import. Responsible for energy coupling to the transport system. The polypeptide is Phosphate import ATP-binding protein PstB (Methanothermobacter thermautotrophicus (strain ATCC 29096 / DSM 1053 / JCM 10044 / NBRC 100330 / Delta H) (Methanobacterium thermoautotrophicum)).